A 327-amino-acid polypeptide reads, in one-letter code: Undecaprenyl-phosphate 4-deoxy-4-formamido-L-arabinose transferase (327 aa).

Helical transmembrane passes span 235–255 (LLSL…VLLV) and 270–290 (VFTL…GMGL).

This sequence belongs to the glycosyltransferase 2 family.

It localises to the cell inner membrane. It catalyses the reaction UDP-4-deoxy-4-formamido-beta-L-arabinose + di-trans,octa-cis-undecaprenyl phosphate = 4-deoxy-4-formamido-alpha-L-arabinopyranosyl di-trans,octa-cis-undecaprenyl phosphate + UDP. The protein operates within glycolipid biosynthesis; 4-amino-4-deoxy-alpha-L-arabinose undecaprenyl phosphate biosynthesis; 4-amino-4-deoxy-alpha-L-arabinose undecaprenyl phosphate from UDP-4-deoxy-4-formamido-beta-L-arabinose and undecaprenyl phosphate: step 1/2. It functions in the pathway bacterial outer membrane biogenesis; lipopolysaccharide biosynthesis. Its function is as follows. Catalyzes the transfer of 4-deoxy-4-formamido-L-arabinose from UDP to undecaprenyl phosphate. The modified arabinose is attached to lipid A and is required for resistance to polymyxin and cationic antimicrobial peptides. In Yersinia pseudotuberculosis serotype IB (strain PB1/+), this protein is Undecaprenyl-phosphate 4-deoxy-4-formamido-L-arabinose transferase.